The primary structure comprises 127 residues: Prefoldin subunit 6 (127 aa).

An N-acetylalanine modification is found at Ala2. At Lys21 the chain carries N6-acetyllysine. N6-acetyllysine; alternate is present on Lys66. A Glycyl lysine isopeptide (Lys-Gly) (interchain with G-Cter in SUMO1); alternate cross-link involves residue Lys66. Lys66 participates in a covalent cross-link: Glycyl lysine isopeptide (Lys-Gly) (interchain with G-Cter in SUMO2); alternate.

It belongs to the prefoldin subunit beta family. As to quaternary structure, heterohexamer of two PFD-alpha type and four PFD-beta type subunits. Component of the PAQosome complex which is responsible for the biogenesis of several protein complexes and which consists of R2TP complex members RUVBL1, RUVBL2, RPAP3 and PIH1D1, URI complex members PFDN2, PFDN6, PDRG1, UXT and URI1 as well as ASDURF, POLR2E and DNAAF10/WDR92.

Its function is as follows. Binds specifically to cytosolic chaperonin (c-CPN) and transfers target proteins to it. Binds to nascent polypeptide chain and promotes folding in an environment in which there are many competing pathways for nonnative proteins. This is Prefoldin subunit 6 (Pfdn6) from Mus musculus (Mouse).